The following is a 261-amino-acid chain: GTP cyclohydrolase FolE2 (261 aa).

It belongs to the GTP cyclohydrolase IV family.

It catalyses the reaction GTP + H2O = 7,8-dihydroneopterin 3'-triphosphate + formate + H(+). It participates in cofactor biosynthesis; 7,8-dihydroneopterin triphosphate biosynthesis; 7,8-dihydroneopterin triphosphate from GTP: step 1/1. Functionally, converts GTP to 7,8-dihydroneopterin triphosphate. The protein is GTP cyclohydrolase FolE2 of Fervidobacterium nodosum (strain ATCC 35602 / DSM 5306 / Rt17-B1).